The primary structure comprises 389 residues: Dual-specificity RNA methyltransferase RlmN (389 aa).

Residue E94 is the Proton acceptor of the active site. The 234-residue stretch at 134 to 367 (PRVRVTQCIS…CFVRRRRGDD (234 aa)) folds into the Radical SAM core domain. The cysteines at positions 141 and 372 are disulfide-linked. C148, C152, and C155 together coordinate [4Fe-4S] cluster. Residues 197–198 (GE), S229, 253–255 (SLH), and N329 each bind S-adenosyl-L-methionine. Residue C372 is the S-methylcysteine intermediate of the active site.

The protein belongs to the radical SAM superfamily. RlmN family. The cofactor is [4Fe-4S] cluster.

The protein localises to the cytoplasm. It catalyses the reaction adenosine(2503) in 23S rRNA + 2 reduced [2Fe-2S]-[ferredoxin] + 2 S-adenosyl-L-methionine = 2-methyladenosine(2503) in 23S rRNA + 5'-deoxyadenosine + L-methionine + 2 oxidized [2Fe-2S]-[ferredoxin] + S-adenosyl-L-homocysteine. The enzyme catalyses adenosine(37) in tRNA + 2 reduced [2Fe-2S]-[ferredoxin] + 2 S-adenosyl-L-methionine = 2-methyladenosine(37) in tRNA + 5'-deoxyadenosine + L-methionine + 2 oxidized [2Fe-2S]-[ferredoxin] + S-adenosyl-L-homocysteine. In terms of biological role, specifically methylates position 2 of adenine 2503 in 23S rRNA and position 2 of adenine 37 in tRNAs. m2A2503 modification seems to play a crucial role in the proofreading step occurring at the peptidyl transferase center and thus would serve to optimize ribosomal fidelity. The protein is Dual-specificity RNA methyltransferase RlmN of Sorangium cellulosum (strain So ce56) (Polyangium cellulosum (strain So ce56)).